Reading from the N-terminus, the 494-residue chain is Glutamate--tRNA ligase (494 aa).

The short motif at 15–25 (PSPTGNPHVGL) is the 'HIGH' region element. Positions 112, 114, 139, and 141 each coordinate Zn(2+). Residues 260–264 (KLSKR) carry the 'KMSKS' region motif. An ATP-binding site is contributed by K263.

It belongs to the class-I aminoacyl-tRNA synthetase family. Glutamate--tRNA ligase type 1 subfamily. In terms of assembly, monomer. Requires Zn(2+) as cofactor.

It localises to the cytoplasm. It catalyses the reaction tRNA(Glu) + L-glutamate + ATP = L-glutamyl-tRNA(Glu) + AMP + diphosphate. Its function is as follows. Catalyzes the attachment of glutamate to tRNA(Glu) in a two-step reaction: glutamate is first activated by ATP to form Glu-AMP and then transferred to the acceptor end of tRNA(Glu). The protein is Glutamate--tRNA ligase of Streptomyces coelicolor (strain ATCC BAA-471 / A3(2) / M145).